The chain runs to 345 residues: MLPTVNNNIVIALDAMGGDFAPLSVIQGAGFFLDNLVDPGIKVFFHIYGDQKEISPLLLKYRKVSDNSEFTHYSNNVLANDKPSFALRHRKDSSMKAAIEAVKKGKASGMVSSGNTGALMAISRFILGTLPNVYRPAIVSVCPTKAKSFALLDLGANVDCNVDSLFQFALMGSMFAKIALKVDNPEVALLNIGTEEVKGNDSVRGAFKLLKSAPNINFKGYIEASEFLEGNIDVIVADGFVGNVMLKTAEATASTFIDLIKQEMFNSWATKMLVGILLKSKLNKVLMRFNPKIRSGAMFLGLNGIVIKSHGNSDAVSFAHAIKFAVNSINENLNQKIISEVNQVE.

It belongs to the PlsX family. Homodimer. Probably interacts with PlsY.

Its subcellular location is the cytoplasm. It carries out the reaction a fatty acyl-[ACP] + phosphate = an acyl phosphate + holo-[ACP]. Its pathway is lipid metabolism; phospholipid metabolism. Its function is as follows. Catalyzes the reversible formation of acyl-phosphate (acyl-PO(4)) from acyl-[acyl-carrier-protein] (acyl-ACP). This enzyme utilizes acyl-ACP as fatty acyl donor, but not acyl-CoA. The chain is Phosphate acyltransferase from Wolbachia sp. subsp. Brugia malayi (strain TRS).